Consider the following 244-residue polypeptide: UDP-2,3-diacylglucosamine hydrolase (244 aa).

Mn(2+) is bound by residues Asp-8, His-10, Asp-41, Asn-79, and His-114. 79–80 (NR) serves as a coordination point for substrate. 5 residues coordinate substrate: Asp-122, Ser-160, Asn-164, Lys-167, and His-195. Residues His-195 and His-197 each coordinate Mn(2+).

This sequence belongs to the LpxH family. The cofactor is Mn(2+).

The protein resides in the cell inner membrane. The catalysed reaction is UDP-2-N,3-O-bis[(3R)-3-hydroxytetradecanoyl]-alpha-D-glucosamine + H2O = 2-N,3-O-bis[(3R)-3-hydroxytetradecanoyl]-alpha-D-glucosaminyl 1-phosphate + UMP + 2 H(+). It functions in the pathway glycolipid biosynthesis; lipid IV(A) biosynthesis; lipid IV(A) from (3R)-3-hydroxytetradecanoyl-[acyl-carrier-protein] and UDP-N-acetyl-alpha-D-glucosamine: step 4/6. In terms of biological role, hydrolyzes the pyrophosphate bond of UDP-2,3-diacylglucosamine to yield 2,3-diacylglucosamine 1-phosphate (lipid X) and UMP by catalyzing the attack of water at the alpha-P atom. Involved in the biosynthesis of lipid A, a phosphorylated glycolipid that anchors the lipopolysaccharide to the outer membrane of the cell. The sequence is that of UDP-2,3-diacylglucosamine hydrolase from Hahella chejuensis (strain KCTC 2396).